The chain runs to 1235 residues: MATGTGKHKLLSTGPTEPWSIREKLCLASSVMRSGDQNWVSVSRAIKPFAEPGRPPDWFSQKHCASQYSELLETTETPKRKRGEKGEVVETVEDVIVRKLTAERVEELKKVIKETQERYRRLKRDAELIQAGHMDSRLDELCNDIATKKKLEEEEAEVKRKATDAAYQARQAVKTPPRRLPTVMVRSPIDSASPGGDYPLGDLTPTTMEEATSGVNESEMAVASGHLNSTGVLLEVGGVLPMIHGGEIQQTPNTVAASPAASGAPTLSRLLEAGPTQFTTPLASFTTVASEPPVKLVPPPVESVSQATIVMMPALPAPSSAPAVSTTESVAPVSQPDNCVPMEAVGDPHTVTVSMDSSEISMIINSIKEECFRSGVAEAPVGSKAPSIDGKEELDLAEKMDIAVSYTGEELDFETVGDIIAIIEDKVDDHPEVLDVAAVEAALSFCEENDDPQSLPGPWEHPIQQERDKPVPLPAPEMTVKQERLDFEETENKGIHELVDIREPSAEIKVEPAEPEPVISGAEIVAGVVPATSMEPPELRSQDLDEELGSTAAGEIVEADVAIGKGDETPLTNVKTEASPESMLSPSHGSNPIEDPLEAETQHKFEMSDSLKEESGTIFGSQIKDAPGEDEEEDGVSEAASLEEPKEEDQGEGYLSEMDNEPPVSESDDGFSIHNATLQSHTLADSIPSSPASSQFSVCSEDQEAIQAQKIWKKAIMLVWRAAANHRYANVFLQPVTDDIAPGYHSIVQRPMDLSTIKKNIENGLIRSTAEFQRDIMLMFQNAVMYNSSDHDVYHMAVEMQRDVLEQIQQFLATQLIMQTSESGISAKSLRGRDSTRKQDASEKDSVPMGSPAFLLSLFMGHEWVWLDSEQDHPNDSELSNDCRSLFSSWDSSLDLDVGNWRETEDPEAEELEESSPEREPSELLVGDGGSEESQEAARKASHQNLLHFLSEVAYLMEPLCISSNESSEGCCPPSGTRQEGREIKASEGERELCRETEELSAKGDPLVAEKPLGENGKPEVASAPSVICTVQGLLTESEEGEAQQESKGEDQGEVYVSEMEDQPPSGECDDAFNIKETPLVDTLFSHATSSKLTDLSQDDPVQDHLLFKKTLLPVWKMIASHRFSSPFLKPVSERQAPGYKDVVKRPMDLTSLKRNLSKGRIRTMAQFLRDLMLMFQNAVMYNDSDHHVYHMAVEMRQEVLEQIQVLNIWLDKRKGSSSLEGEPANPVDDGKPVF.

N6-acetyllysine is present on lysine 85. Residues 97–171 adopt a coiled-coil conformation; sequence VRKLTAERVE…ATDAAYQARQ (75 aa). Position 124 is a phosphothreonine (arginine 124). Phosphoserine is present on residues leucine 128 and aspartate 144. A disordered region spans residues 186-205; it reads RSPIDSASPGGDYPLGDLTP. Alanine 264 carries the post-translational modification Phosphothreonine. 4 positions are modified to phosphoserine: serine 268, serine 284, serine 383, and serine 387. A Glycyl lysine isopeptide (Lys-Gly) (interchain with G-Cter in SUMO2) cross-link involves residue lysine 469. Position 481 is an N6-acetyllysine; alternate (lysine 481). Lysine 481 participates in a covalent cross-link: Glycyl lysine isopeptide (Lys-Gly) (interchain with G-Cter in SUMO1); alternate. Lysine 481 participates in a covalent cross-link: Glycyl lysine isopeptide (Lys-Gly) (interchain with G-Cter in SUMO2); alternate. Glycyl lysine isopeptide (Lys-Gly) (interchain with G-Cter in SUMO2) cross-links involve residues lysine 509 and lysine 575. The interval 551 to 597 is disordered; sequence TAAGEIVEADVAIGKGDETPLTNVKTEASPESMLSPSHGSNPIEDPL. Position 579 is a phosphoserine (serine 579). Residue lysine 612 forms a Glycyl lysine isopeptide (Lys-Gly) (interchain with G-Cter in SUMO2) linkage. Residues serine 621, serine 637, and serine 641 each carry the phosphoserine modification. Positions 621–672 are disordered; it reads SQIKDAPGEDEEEDGVSEAASLEEPKEEDQGEGYLSEMDNEPPVSESDDGFS. One can recognise a Bromo 1 domain in the interval 706 to 811; sequence IQAQKIWKKA…RDVLEQIQQF (106 aa). 3 disordered regions span residues 827–848, 903–940, and 966–999; these read AKSLRGRDSTRKQDASEKDSVP, ETEDPEAEELEESSPEREPSELLVGDGGSEESQEAARK, and ESSEGCCPPSGTRQEGREIKASEGERELCRETEE. Residues 831 to 846 are compositionally biased toward basic and acidic residues; that stretch reads RGRDSTRKQDASEKDS. Residues 905 to 915 show a composition bias toward acidic residues; it reads EDPEAEELEES. Leucine 924 is subject to Phosphoserine. Residues 979–999 show a composition bias toward basic and acidic residues; the sequence is QEGREIKASEGERELCRETEE. Residues 1099 to 1207 form the Bromo 2 domain; that stretch reads DDPVQDHLLF…QEVLEQIQVL (109 aa).

Component of the NuA4 histone acetyltransferase complex which contains the catalytic subunit KAT5/TIP60 and the subunits EP400, TRRAP/PAF400, BRD8/SMAP, EPC1, DMAP1/DNMAP1, RUVBL1/TIP49, RUVBL2, ING3, actin, ACTL6A/BAF53A, MORF4L1/MRG15, MORF4L2/MRGX, MRGBP, YEATS4/GAS41, VPS72/YL1 and MEAF6. The NuA4 complex interacts with MYC and the adenovirus E1A protein. Component of a NuA4-related complex which contains EP400, TRRAP/PAF400, SRCAP, BRD8/SMAP, EPC1, DMAP1/DNMAP1, RUVBL1/TIP49, RUVBL2, actin, ACTL6A/BAF53A, VPS72 and YEATS4/GAS41. BRD8 isoform 2 interacts with RXRA/NR2B1 and THRB/ERBA2. Component of a SWR1-like complex. Expressed in adipose tissue, brain, heart, kidney, liver, lung, pancreas, placenta and skeletal muscle.

The protein resides in the nucleus. Its function is as follows. May act as a coactivator during transcriptional activation by hormone-activated nuclear receptors (NR). Isoform 2 stimulates transcriptional activation by AR/DHTR, ESR1/NR3A1, RXRA/NR2B1 and THRB/ERBA2. At least isoform 1 and isoform 2 are components of the NuA4 histone acetyltransferase (HAT) complex which is involved in transcriptional activation of select genes principally by acetylation of nucleosomal histones H4 and H2A. This modification may both alter nucleosome - DNA interactions and promote interaction of the modified histones with other proteins which positively regulate transcription. This complex may be required for the activation of transcriptional programs associated with oncogene and proto-oncogene mediated growth induction, tumor suppressor mediated growth arrest and replicative senescence, apoptosis, and DNA repair. NuA4 may also play a direct role in DNA repair when recruited to sites of DNA damage. Component of a SWR1-like complex that specifically mediates the removal of histone H2A.Z/H2AZ1 from the nucleosome. The chain is Bromodomain-containing protein 8 (BRD8) from Homo sapiens (Human).